The following is a 211-amino-acid chain: Nucleoside triphosphate pyrophosphatase (211 aa).

Asp76 (proton acceptor) is an active-site residue.

This sequence belongs to the Maf family. The cofactor is a divalent metal cation.

It localises to the cytoplasm. The catalysed reaction is a ribonucleoside 5'-triphosphate + H2O = a ribonucleoside 5'-phosphate + diphosphate + H(+). It catalyses the reaction a 2'-deoxyribonucleoside 5'-triphosphate + H2O = a 2'-deoxyribonucleoside 5'-phosphate + diphosphate + H(+). Nucleoside triphosphate pyrophosphatase. May have a dual role in cell division arrest and in preventing the incorporation of modified nucleotides into cellular nucleic acids. This Saccharopolyspora erythraea (strain ATCC 11635 / DSM 40517 / JCM 4748 / NBRC 13426 / NCIMB 8594 / NRRL 2338) protein is Nucleoside triphosphate pyrophosphatase.